Here is a 454-residue protein sequence, read N- to C-terminus: COBRA-like protein 6 (454 aa).

A signal peptide spans 1–24; sequence MGAMLNLLLVVTVILCSILSPTRF. Residues asparagine 104, asparagine 191, asparagine 320, asparagine 355, and asparagine 391 are each glycosylated (N-linked (GlcNAc...) asparagine). Serine 429 carries the GPI-anchor amidated serine lipid modification. The propeptide at 430-454 is removed in mature form; sequence SSSSAVISSVSVVFCFLLHHLLLLV.

The protein belongs to the COBRA family. As to expression, expressed in flowers and siliques.

The protein localises to the cell membrane. This is COBRA-like protein 6 (COBL6) from Arabidopsis thaliana (Mouse-ear cress).